Consider the following 688-residue polypeptide: UvrABC system protein B (688 aa).

The Helicase ATP-binding domain maps to Gly31–Arg188. Gly44–Ser51 contributes to the ATP binding site. The Beta-hairpin motif lies at Tyr97–Val120. Residues Gln434 to Ile587 enclose the Helicase C-terminal domain. The tract at residues Gly607–Gly632 is disordered. The UVR domain occupies Glu642–Glu677.

It belongs to the UvrB family. Forms a heterotetramer with UvrA during the search for lesions. Interacts with UvrC in an incision complex.

It is found in the cytoplasm. Its function is as follows. The UvrABC repair system catalyzes the recognition and processing of DNA lesions. A damage recognition complex composed of 2 UvrA and 2 UvrB subunits scans DNA for abnormalities. Upon binding of the UvrA(2)B(2) complex to a putative damaged site, the DNA wraps around one UvrB monomer. DNA wrap is dependent on ATP binding by UvrB and probably causes local melting of the DNA helix, facilitating insertion of UvrB beta-hairpin between the DNA strands. Then UvrB probes one DNA strand for the presence of a lesion. If a lesion is found the UvrA subunits dissociate and the UvrB-DNA preincision complex is formed. This complex is subsequently bound by UvrC and the second UvrB is released. If no lesion is found, the DNA wraps around the other UvrB subunit that will check the other stand for damage. This chain is UvrABC system protein B, found in Clavibacter michiganensis subsp. michiganensis (strain NCPPB 382).